Reading from the N-terminus, the 484-residue chain is tRNA sulfurtransferase (484 aa).

The THUMP domain occupies 63–167 (QAFGERLACI…GDKLYMVTKR (105 aa)). ATP is bound by residues 185–186 (LI), K267, G289, and Q298. C346 and C458 are disulfide-bonded. One can recognise a Rhodanese domain in the interval 406-484 (IDTNEVVIDI…GYHNVKVYRP (79 aa)). C458 acts as the Cysteine persulfide intermediate in catalysis.

This sequence belongs to the ThiI family.

The protein localises to the cytoplasm. The enzyme catalyses [ThiI sulfur-carrier protein]-S-sulfanyl-L-cysteine + a uridine in tRNA + 2 reduced [2Fe-2S]-[ferredoxin] + ATP + H(+) = [ThiI sulfur-carrier protein]-L-cysteine + a 4-thiouridine in tRNA + 2 oxidized [2Fe-2S]-[ferredoxin] + AMP + diphosphate. It carries out the reaction [ThiS sulfur-carrier protein]-C-terminal Gly-Gly-AMP + S-sulfanyl-L-cysteinyl-[cysteine desulfurase] + AH2 = [ThiS sulfur-carrier protein]-C-terminal-Gly-aminoethanethioate + L-cysteinyl-[cysteine desulfurase] + A + AMP + 2 H(+). The protein operates within cofactor biosynthesis; thiamine diphosphate biosynthesis. In terms of biological role, catalyzes the ATP-dependent transfer of a sulfur to tRNA to produce 4-thiouridine in position 8 of tRNAs, which functions as a near-UV photosensor. Also catalyzes the transfer of sulfur to the sulfur carrier protein ThiS, forming ThiS-thiocarboxylate. This is a step in the synthesis of thiazole, in the thiamine biosynthesis pathway. The sulfur is donated as persulfide by IscS. The protein is tRNA sulfurtransferase of Shewanella sp. (strain MR-7).